The primary structure comprises 602 residues: Elongation factor 4 (602 aa).

The tr-type G domain occupies 2–184 (NHIRNFSIIA…QIVAKVPAPR (183 aa)). GTP is bound by residues 14–19 (DHGKST) and 131–134 (NKMD).

Belongs to the TRAFAC class translation factor GTPase superfamily. Classic translation factor GTPase family. LepA subfamily.

It is found in the cell inner membrane. The enzyme catalyses GTP + H2O = GDP + phosphate + H(+). In terms of biological role, required for accurate and efficient protein synthesis under certain stress conditions. May act as a fidelity factor of the translation reaction, by catalyzing a one-codon backward translocation of tRNAs on improperly translocated ribosomes. Back-translocation proceeds from a post-translocation (POST) complex to a pre-translocation (PRE) complex, thus giving elongation factor G a second chance to translocate the tRNAs correctly. Binds to ribosomes in a GTP-dependent manner. The sequence is that of Elongation factor 4 from Acidovorax ebreus (strain TPSY) (Diaphorobacter sp. (strain TPSY)).